A 348-amino-acid chain; its full sequence is Mycothiol acetyltransferase (348 aa).

N-acetyltransferase domains follow at residues 12–156 (TSMR…VDVT) and 169–330 (VAVR…HGTP). E44 contributes to the 1D-myo-inositol 2-(L-cysteinylamino)-2-deoxy-alpha-D-glucopyranoside binding site. 91–93 (LVV) is a binding site for acetyl-CoA. Positions 196, 235, and 253 each coordinate 1D-myo-inositol 2-(L-cysteinylamino)-2-deoxy-alpha-D-glucopyranoside. Residues 257–259 (VGV) and 264–270 (QGLGMGR) contribute to the acetyl-CoA site. Y291 serves as a coordination point for 1D-myo-inositol 2-(L-cysteinylamino)-2-deoxy-alpha-D-glucopyranoside. An acetyl-CoA-binding site is contributed by 296-301 (NTVAVH). The tract at residues 320–348 (PPAGSPAHGTPLVRVTDTPSSPGDATMGS) is disordered. Polar residues predominate over residues 336–348 (DTPSSPGDATMGS).

Belongs to the acetyltransferase family. MshD subfamily. In terms of assembly, monomer.

The enzyme catalyses 1D-myo-inositol 2-(L-cysteinylamino)-2-deoxy-alpha-D-glucopyranoside + acetyl-CoA = mycothiol + CoA + H(+). Catalyzes the transfer of acetyl from acetyl-CoA to desacetylmycothiol (Cys-GlcN-Ins) to form mycothiol. This Cellulomonas flavigena (strain ATCC 482 / DSM 20109 / BCRC 11376 / JCM 18109 / NBRC 3775 / NCIMB 8073 / NRS 134) protein is Mycothiol acetyltransferase.